The primary structure comprises 359 residues: Phospho-N-acetylmuramoyl-pentapeptide-transferase (359 aa).

10 helical membrane passes run 3–23 (QIII…PVLI), 55–75 (VAIL…GIAF), 84–104 (GLLV…DDFI), 117–137 (TSKT…VLQF), 156–176 (IATV…LVMS), 187–207 (LDGL…IVTF), 231–251 (LAVI…WNAA), 255–275 (IFMG…LSVT), 280–300 (LLAV…VLQI), and 334–354 (FWLL…GEWL).

This sequence belongs to the glycosyltransferase 4 family. MraY subfamily. Requires Mg(2+) as cofactor.

It localises to the cell membrane. It catalyses the reaction UDP-N-acetyl-alpha-D-muramoyl-L-alanyl-gamma-D-glutamyl-meso-2,6-diaminopimeloyl-D-alanyl-D-alanine + di-trans,octa-cis-undecaprenyl phosphate = di-trans,octa-cis-undecaprenyl diphospho-N-acetyl-alpha-D-muramoyl-L-alanyl-D-glutamyl-meso-2,6-diaminopimeloyl-D-alanyl-D-alanine + UMP. The protein operates within cell wall biogenesis; peptidoglycan biosynthesis. Functionally, catalyzes the initial step of the lipid cycle reactions in the biosynthesis of the cell wall peptidoglycan: transfers peptidoglycan precursor phospho-MurNAc-pentapeptide from UDP-MurNAc-pentapeptide onto the lipid carrier undecaprenyl phosphate, yielding undecaprenyl-pyrophosphoryl-MurNAc-pentapeptide, known as lipid I. This Mycobacteroides abscessus (strain ATCC 19977 / DSM 44196 / CCUG 20993 / CIP 104536 / JCM 13569 / NCTC 13031 / TMC 1543 / L948) (Mycobacterium abscessus) protein is Phospho-N-acetylmuramoyl-pentapeptide-transferase.